A 220-amino-acid polypeptide reads, in one-letter code: Phosphoserine phosphatase (220 aa).

The Nucleophile role is filled by aspartate 11. Mg(2+) contacts are provided by aspartate 11 and aspartate 13. Aspartate 13 (proton donor) is an active-site residue. Residues glutamate 20, arginine 56, 99-100, and lysine 144 each bind substrate; that span reads SG. Aspartate 167 contributes to the Mg(2+) binding site. Asparagine 170 contributes to the substrate binding site.

The protein belongs to the HAD-like hydrolase superfamily. SerB family. It depends on Mg(2+) as a cofactor.

It carries out the reaction O-phospho-L-serine + H2O = L-serine + phosphate. The enzyme catalyses O-phospho-D-serine + H2O = D-serine + phosphate. It functions in the pathway amino-acid biosynthesis; L-serine biosynthesis; L-serine from 3-phospho-D-glycerate: step 3/3. The sequence is that of Phosphoserine phosphatase from Idiomarina loihiensis (strain ATCC BAA-735 / DSM 15497 / L2-TR).